We begin with the raw amino-acid sequence, 125 residues long: Glycine cleavage system H protein (125 aa).

Positions 23–103 (TALVGITDFA…PYNAWLIKMK (81 aa)) constitute a Lipoyl-binding domain. Residue lysine 64 is modified to N6-lipoyllysine.

It belongs to the GcvH family. As to quaternary structure, the glycine cleavage system is composed of four proteins: P, T, L and H. (R)-lipoate is required as a cofactor.

The glycine cleavage system catalyzes the degradation of glycine. The H protein shuttles the methylamine group of glycine from the P protein to the T protein. The polypeptide is Glycine cleavage system H protein (Chlorobium chlorochromatii (strain CaD3)).